Consider the following 609-residue polypeptide: UvrABC system protein C (609 aa).

Positions 13-91 constitute a GIY-YIG domain; that stretch reads HEPGVYRMYD…IKLYQPRYNV (79 aa). A UVR domain is found at 201-236; that stretch reads QQVLDYLIGKMEQASRNLDFEQAARYRDQIQAVRSV.

Belongs to the UvrC family. In terms of assembly, interacts with UvrB in an incision complex.

It localises to the cytoplasm. Its function is as follows. The UvrABC repair system catalyzes the recognition and processing of DNA lesions. UvrC both incises the 5' and 3' sides of the lesion. The N-terminal half is responsible for the 3' incision and the C-terminal half is responsible for the 5' incision. The protein is UvrABC system protein C of Haemophilus influenzae (strain 86-028NP).